The following is a 159-amino-acid chain: U1 small nuclear ribonucleoprotein C (159 aa).

The segment at 4–36 (FYCDYCDTYLTHDSPSVRKTHCSGRKHKENVKD) adopts a Matrin-type zinc-finger fold. Disordered stretches follow at residues 63-95 (PPTP…MPAP) and 139-159 (MRPP…RPDR). Residues 77–95 (IPPPPSLGGPPRPGMMPAP) are compositionally biased toward pro residues.

Belongs to the U1 small nuclear ribonucleoprotein C family. Component of the U1 snRNP. The U1 snRNP is composed of the U1 snRNA and the 7 core Sm proteins snrpb, snrpd1, snrpd2, snrpd3, snrpe, snrpf and snrpg that assemble in a heptameric protein ring on the Sm site of the small nuclear RNA to form the core snRNP, and at least 3 U1 snRNP-specific proteins snrnp70/U1-70K, snrpa/U1-A and snrpc/U1-C. snrpc/U1-C interacts with U1 snRNA and the 5' splice-site region of the pre-mRNA.

The protein resides in the nucleus. In terms of biological role, component of the spliceosomal U1 snRNP, which is essential for recognition of the pre-mRNA 5' splice-site and the subsequent assembly of the spliceosome. SNRPC/U1-C is directly involved in initial 5' splice-site recognition for both constitutive and regulated alternative splicing. The interaction with the 5' splice-site seems to precede base-pairing between the pre-mRNA and the U1 snRNA. Stimulates commitment or early (E) complex formation by stabilizing the base pairing of the 5' end of the U1 snRNA and the 5' splice-site region. The protein is U1 small nuclear ribonucleoprotein C of Xenopus laevis (African clawed frog).